The primary structure comprises 206 residues: tRNA(Phe) 7-((3-amino-3-carboxypropyl)-4-demethylwyosine(37)-N(4))-methyltransferase 2 (206 aa).

It belongs to the TYW3 family.

It catalyses the reaction 4-demethyl-7-[(3S)-3-amino-3-carboxypropyl]wyosine(37) in tRNA(Phe) + S-adenosyl-L-methionine = 7-[(3S)-3-amino-3-carboxypropyl]wyosine(37) in tRNA(Phe) + S-adenosyl-L-homocysteine + H(+). Functionally, S-adenosyl-L-methionine-dependent methyltransferase that acts as a component of the wyosine derivatives biosynthesis pathway. Probably methylates N-4 position of wybutosine-86 to produce wybutosine-72. The polypeptide is tRNA(Phe) 7-((3-amino-3-carboxypropyl)-4-demethylwyosine(37)-N(4))-methyltransferase 2 (Pyrococcus furiosus (strain ATCC 43587 / DSM 3638 / JCM 8422 / Vc1)).